The following is a 643-amino-acid chain: MPIITLPDGSQRQFDNPVSVMEVAQSIGAGLAKATIAGRVNGERRDASDIISEDATLEIITAKDEDGLEIIRHSTAHLLGHAIKQLFPNVKMAIGPTIDNGFYYDIDLDRSLTQEDLDALEARMLELAKTNYDVVKKRVSWQEARDTFESRGESYKMAILDENISKDDRPALYHHEEYIDMCRGPHVPNMRFCHHFKLQKVAGAYWRGDSKNKMLQRIYGTAWADKKQLADYLHRLEEAAKRDHRKIGKALDLYHMQEEAPGMVFWHNDGWTIFRELETFVRTKLKQYDYQEVKGPFMMDRVLWEKTGHWQNYGDLMFTTQSENREYAIKPMNCPGHIQIFNQGLKSYRDLPLRMAEFGSCHRNEPSGSLHGLMRVRGFTQDDAHIFCMPEQVESEVTSCIKMVYDIYSTFGFENIQVKLSTRPANSIGTDEMWNKAEADLAAALTANGLAFEIQEGEGAFYGPKIEFALRDCLDREWQCGTIQLDFFLPERLSASYVAEDNDRKTPVMIHRAILGSIERFIGIITEEYAGFFPAWLAPVQAVVMNITDSQAEYVQQVVKQLSDAGLRVKADLRNEKVGFKVREHTLRRVPYMLVCGDKEIAEGKVSVRTRKGADLGTYKVEEFVEMLKKQVRGRELKLLGEE.

A TGS domain is found at 1-61 (MPIITLPDGS…SEDATLEIIT (61 aa)). The interval 243-534 (DHRKIGKALD…ITEEYAGFFP (292 aa)) is catalytic. Zn(2+)-binding residues include Cys334, His385, and His511.

The protein belongs to the class-II aminoacyl-tRNA synthetase family. As to quaternary structure, homodimer. Requires Zn(2+) as cofactor.

Its subcellular location is the cytoplasm. The catalysed reaction is tRNA(Thr) + L-threonine + ATP = L-threonyl-tRNA(Thr) + AMP + diphosphate + H(+). Catalyzes the attachment of threonine to tRNA(Thr) in a two-step reaction: L-threonine is first activated by ATP to form Thr-AMP and then transferred to the acceptor end of tRNA(Thr). Also edits incorrectly charged L-seryl-tRNA(Thr). The chain is Threonine--tRNA ligase from Glaesserella parasuis serovar 5 (strain SH0165) (Haemophilus parasuis).